Consider the following 216-residue polypeptide: Large ribosomal subunit protein uL3 (216 aa).

Gln-157 bears the N5-methylglutamine mark.

The protein belongs to the universal ribosomal protein uL3 family. As to quaternary structure, part of the 50S ribosomal subunit. Forms a cluster with proteins L14 and L19. In terms of processing, methylated by PrmB.

One of the primary rRNA binding proteins, it binds directly near the 3'-end of the 23S rRNA, where it nucleates assembly of the 50S subunit. The chain is Large ribosomal subunit protein uL3 from Xanthomonas campestris pv. campestris (strain 8004).